The following is a 357-amino-acid chain: MRVLVAMSGGVDSSVAAARMVAAGHDVVGVHLALSSAPGTLRTGSRGCCSKEDAGDARRVADVLGIPFYVWDFADRFKEDVIDDFVESYARGETPNPCVRCNERIKFSALASRALALGFDALATGHYARLADGRLRRAVDHDKDQSYVLAVLTAEQLRHAVFPIGDTPKAQIREEAARLGLAVADKADSHDICFIPSGDTKAFLGARIGVRRGNVVDAAGTVLAEHDGVHGFTIGQRKGLGIPGPGPDGSPRYVTGIDAQTGTVHVGDVADLEVTSLQGDAPVFTSGVAPTGPLECVVQVRAHGGVADAVAELRGDTLEVSLRTPLRGVAPGQTLVLYRRDPAGDEVLASATIRATH.

ATP is bound by residues 6–13 (AMSGGVDS) and leucine 32. The active-site Nucleophile is cysteine 101. A disulfide bridge connects residues cysteine 101 and cysteine 193. Glycine 125 contacts ATP. The tract at residues 143-145 (KDQ) is interaction with tRNA. Cysteine 193 functions as the Cysteine persulfide intermediate in the catalytic mechanism.

This sequence belongs to the MnmA/TRMU family.

It localises to the cytoplasm. It catalyses the reaction S-sulfanyl-L-cysteinyl-[protein] + uridine(34) in tRNA + AH2 + ATP = 2-thiouridine(34) in tRNA + L-cysteinyl-[protein] + A + AMP + diphosphate + H(+). Its function is as follows. Catalyzes the 2-thiolation of uridine at the wobble position (U34) of tRNA, leading to the formation of s(2)U34. The chain is tRNA-specific 2-thiouridylase MnmA from Mycolicibacterium gilvum (strain PYR-GCK) (Mycobacterium gilvum (strain PYR-GCK)).